A 253-amino-acid chain; its full sequence is Large ribosomal subunit protein uL4 (253 aa).

The protein belongs to the universal ribosomal protein uL4 family. In terms of assembly, part of the 50S ribosomal subunit.

In terms of biological role, one of the primary rRNA binding proteins, this protein initially binds near the 5'-end of the 23S rRNA. It is important during the early stages of 50S assembly. It makes multiple contacts with different domains of the 23S rRNA in the assembled 50S subunit and ribosome. Forms part of the polypeptide exit tunnel. This is Large ribosomal subunit protein uL4 from Methanococcoides burtonii (strain DSM 6242 / NBRC 107633 / OCM 468 / ACE-M).